A 637-amino-acid chain; its full sequence is Chaperone protein HtpG (637 aa).

Residues 1–334 (MQDVVNSEKL…SSDLPLNISR (334 aa)) are a; substrate-binding. The b stretch occupies residues 335–558 (ETLQNNKVIE…DGSMDIRMER (224 aa)). Residues 559–637 (FLREQKQLNY…MNNVLVKVYQ (79 aa)) are c.

The protein belongs to the heat shock protein 90 family. As to quaternary structure, homodimer.

Its subcellular location is the cytoplasm. Its function is as follows. Molecular chaperone. Has ATPase activity. The protein is Chaperone protein HtpG of Ehrlichia canis (strain Jake).